The sequence spans 349 residues: Ureidoglycolate dehydrogenase (NAD(+)) (349 aa).

Histidine 116 acts as the Proton acceptor in catalysis. NAD(+) is bound by residues serine 140, 174–176 (DMA), lysine 224, and 306–308 (GQD).

The protein belongs to the LDH2/MDH2 oxidoreductase family. In terms of assembly, homodimer.

It is found in the cytoplasm. The enzyme catalyses (S)-ureidoglycolate + NAD(+) = N-carbamoyl-2-oxoglycine + NADH + H(+). It functions in the pathway nitrogen metabolism; (S)-allantoin degradation; oxalurate from (S)-ureidoglycolate: step 1/1. Its function is as follows. AllD plays a pivotal role as a metabolic branch-point enzyme in nitrogen utilization via the assimilation of allantoin. It is able to utilize allantoin as a sole source of nitrogen under anaerobic conditions. Catalyzes the oxidation of ureidoglycolate to oxalurate. The chain is Ureidoglycolate dehydrogenase (NAD(+)) from Escherichia coli (strain K12).